We begin with the raw amino-acid sequence, 1132 residues long: Telomerase reverse transcriptase (1132 aa).

The tract at residues methionine 1 to asparagine 66 is disordered. Composition is skewed to polar residues over residues serine 9–threonine 26 and glutamine 45–arginine 55. Residues lysine 602–isoleucine 956 enclose the Reverse transcriptase domain. The Mg(2+) site is built by aspartate 708, aspartate 886, and aspartate 887.

It belongs to the reverse transcriptase family. Telomerase subfamily.

The protein resides in the nucleus. It localises to the chromosome. Its subcellular location is the telomere. It carries out the reaction DNA(n) + a 2'-deoxyribonucleoside 5'-triphosphate = DNA(n+1) + diphosphate. Its function is as follows. Telomerase is a ribonucleoprotein enzyme essential for the replication of chromosome termini in most eukaryotes. It elongates telomeres. It is a reverse transcriptase that adds simple sequence repeats to chromosome ends by copying a template sequence within the RNA component of the enzyme. The protein is Telomerase reverse transcriptase (TERT) of Oxytricha trifallax (Sterkiella histriomuscorum).